Consider the following 354-residue polypeptide: UDP-3-O-acylglucosamine N-acyltransferase (354 aa).

The active-site Proton acceptor is H257.

It belongs to the transferase hexapeptide repeat family. LpxD subfamily. Homotrimer.

The catalysed reaction is a UDP-3-O-[(3R)-3-hydroxyacyl]-alpha-D-glucosamine + a (3R)-hydroxyacyl-[ACP] = a UDP-2-N,3-O-bis[(3R)-3-hydroxyacyl]-alpha-D-glucosamine + holo-[ACP] + H(+). It participates in bacterial outer membrane biogenesis; LPS lipid A biosynthesis. Its function is as follows. Catalyzes the N-acylation of UDP-3-O-acylglucosamine using 3-hydroxyacyl-ACP as the acyl donor. Is involved in the biosynthesis of lipid A, a phosphorylated glycolipid that anchors the lipopolysaccharide to the outer membrane of the cell. The protein is UDP-3-O-acylglucosamine N-acyltransferase of Rhizobium johnstonii (strain DSM 114642 / LMG 32736 / 3841) (Rhizobium leguminosarum bv. viciae).